A 290-amino-acid polypeptide reads, in one-letter code: 33 kDa chaperonin (290 aa).

2 disulfide bridges follow: Cys-235–Cys-237 and Cys-268–Cys-271.

It belongs to the HSP33 family. Under oxidizing conditions two disulfide bonds are formed involving the reactive cysteines. Under reducing conditions zinc is bound to the reactive cysteines and the protein is inactive.

Its subcellular location is the cytoplasm. Redox regulated molecular chaperone. Protects both thermally unfolding and oxidatively damaged proteins from irreversible aggregation. Plays an important role in the bacterial defense system toward oxidative stress. The protein is 33 kDa chaperonin of Streptococcus pneumoniae (strain JJA).